Consider the following 118-residue polypeptide: Large ribosomal subunit protein bL20 (118 aa).

Belongs to the bacterial ribosomal protein bL20 family.

In terms of biological role, binds directly to 23S ribosomal RNA and is necessary for the in vitro assembly process of the 50S ribosomal subunit. It is not involved in the protein synthesizing functions of that subunit. The protein is Large ribosomal subunit protein bL20 of Staphylococcus carnosus (strain TM300).